The primary structure comprises 397 residues: Acetate kinase 2 (397 aa).

Asn-10 contributes to the Mg(2+) binding site. Position 17 (Lys-17) interacts with ATP. Arg-90 is a substrate binding site. Catalysis depends on Asp-147, which acts as the Proton donor/acceptor. Residues His-207 to Gly-211, Asp-281 to Arg-283, and Gly-329 to Asn-333 contribute to the ATP site. Glu-383 is a binding site for Mg(2+).

This sequence belongs to the acetokinase family. Homodimer. Requires Mg(2+) as cofactor. Mn(2+) serves as cofactor.

The protein localises to the cytoplasm. It catalyses the reaction acetate + ATP = acetyl phosphate + ADP. Its pathway is metabolic intermediate biosynthesis; acetyl-CoA biosynthesis; acetyl-CoA from acetate: step 1/2. Its function is as follows. Catalyzes the formation of acetyl phosphate from acetate and ATP. Can also catalyze the reverse reaction. The protein is Acetate kinase 2 of Photobacterium profundum (strain SS9).